The following is a 151-amino-acid chain: Acidic phospholipase A2 4 (151 aa).

An N-terminal signal peptide occupies residues 1 to 27; the sequence is MYPAHLLVLLAVCVSLLGAASIPARPL. Intrachain disulfides connect C38–C104, C54–C151, C56–C72, C71–C132, C78–C125, C88–C118, and C111–C123. Ca(2+)-binding residues include Y55, G57, and G59. H75 is an active-site residue. D76 contacts Ca(2+). The active site involves D126.

It belongs to the phospholipase A2 family. Group I subfamily. D49 sub-subfamily. It depends on Ca(2+) as a cofactor. In terms of tissue distribution, expressed by the venom gland.

The protein resides in the secreted. The catalysed reaction is a 1,2-diacyl-sn-glycero-3-phosphocholine + H2O = a 1-acyl-sn-glycero-3-phosphocholine + a fatty acid + H(+). Functionally, PLA2 catalyzes the calcium-dependent hydrolysis of the 2-acyl groups in 3-sn-phosphoglycerides. This Tropidechis carinatus (Australian rough-scaled snake) protein is Acidic phospholipase A2 4.